The chain runs to 291 residues: MIPIQLTVFFMIIYVLESLTIIVQSSLIVAVLGREWLQVRRLMPVDMILISLGISRFCLQWASMLNBFCSYFNLNYVLCNLTITWEFFNILTFWLNSLLTVFYCIKVSSFTHHIFLWLRWRILRLFPWILLGSLMITCVTIIPSAIGNYIQIQLLTMEHLPRNSTVTDKLEKFHQYEFQAHTVALVIPFILFLASTILLMASLTKQIQHHSTGHCNPSMKAHFTALRSLAVLFIVFTSYFLTILITIIGTLFDRRCWLWVWEAFVYAFILMHSTSLMLSSPTLKRILKGKC.

M1 is a topological domain (extracellular). Residues 2 to 22 (IPIQLTVFFMIIYVLESLTII) traverse the membrane as a helical segment. Topologically, residues 23-41 (VQSSLIVAVLGREWLQVRR) are cytoplasmic. The chain crosses the membrane as a helical span at residues 42–62 (LMPVDMILISLGISRFCLQWA). The Extracellular portion of the chain corresponds to 63–84 (SMLNBFCSYFNLNYVLCNLTIT). N80 is a glycosylation site (N-linked (GlcNAc...) asparagine). The chain crosses the membrane as a helical span at residues 85-105 (WEFFNILTFWLNSLLTVFYCI). Residues 106 to 125 (KVSSFTHHIFLWLRWRILRL) lie on the Cytoplasmic side of the membrane. A helical transmembrane segment spans residues 126–146 (FPWILLGSLMITCVTIIPSAI). Topologically, residues 147-182 (GNYIQIQLLTMEHLPRNSTVTDKLEKFHQYEFQAHT) are extracellular. Residue N163 is glycosylated (N-linked (GlcNAc...) asparagine). Residues 183–203 (VALVIPFILFLASTILLMASL) form a helical membrane-spanning segment. At 204–228 (TKQIQHHSTGHCNPSMKAHFTALRS) the chain is on the cytoplasmic side. Residues 229–249 (LAVLFIVFTSYFLTILITIIG) form a helical membrane-spanning segment. At 250 to 257 (TLFDRRCW) the chain is on the extracellular side. The helical transmembrane segment at 258 to 278 (LWVWEAFVYAFILMHSTSLML) threads the bilayer. Residues 279–291 (SSPTLKRILKGKC) lie on the Cytoplasmic side of the membrane.

This sequence belongs to the G-protein coupled receptor T2R family. As to quaternary structure, interacts with RTP3 and RTP4.

Its subcellular location is the cell membrane. In terms of biological role, receptor that may play a role in the perception of bitterness and is gustducin-linked. May play a role in sensing the chemical composition of the gastrointestinal content. The activity of this receptor may stimulate alpha gustducin, mediate PLC-beta-2 activation and lead to the gating of TRPM5. In Gorilla gorilla gorilla (Western lowland gorilla), this protein is Taste receptor type 2 member 16 (TAS2R16).